Consider the following 121-residue polypeptide: Large ribosomal subunit protein bL20 (121 aa).

The protein belongs to the bacterial ribosomal protein bL20 family.

Its function is as follows. Binds directly to 23S ribosomal RNA and is necessary for the in vitro assembly process of the 50S ribosomal subunit. It is not involved in the protein synthesizing functions of that subunit. The sequence is that of Large ribosomal subunit protein bL20 from Moorella thermoacetica (strain ATCC 39073 / JCM 9320).